The primary structure comprises 142 residues: Large ribosomal subunit protein uL13 (142 aa).

The protein belongs to the universal ribosomal protein uL13 family. Part of the 50S ribosomal subunit.

In terms of biological role, this protein is one of the early assembly proteins of the 50S ribosomal subunit, although it is not seen to bind rRNA by itself. It is important during the early stages of 50S assembly. The sequence is that of Large ribosomal subunit protein uL13 from Leptothrix cholodnii (strain ATCC 51168 / LMG 8142 / SP-6) (Leptothrix discophora (strain SP-6)).